The following is an 88-amino-acid chain: Small ribosomal subunit protein uS15 (88 aa).

This sequence belongs to the universal ribosomal protein uS15 family. As to quaternary structure, part of the 30S ribosomal subunit. Forms a bridge to the 50S subunit in the 70S ribosome, contacting the 23S rRNA.

Its function is as follows. One of the primary rRNA binding proteins, it binds directly to 16S rRNA where it helps nucleate assembly of the platform of the 30S subunit by binding and bridging several RNA helices of the 16S rRNA. Functionally, forms an intersubunit bridge (bridge B4) with the 23S rRNA of the 50S subunit in the ribosome. The sequence is that of Small ribosomal subunit protein uS15 from Variovorax paradoxus (strain S110).